The sequence spans 465 residues: Phenylalanine--tRNA ligase alpha subunit (465 aa).

Residues T311 and F389 each contribute to the L-phenylalanine site. E391 is a Mg(2+) binding site.

This sequence belongs to the class-II aminoacyl-tRNA synthetase family. Phe-tRNA synthetase alpha subunit type 2 subfamily. As to quaternary structure, tetramer of two alpha and two beta subunits. Mg(2+) is required as a cofactor.

It localises to the cytoplasm. It catalyses the reaction tRNA(Phe) + L-phenylalanine + ATP = L-phenylalanyl-tRNA(Phe) + AMP + diphosphate + H(+). This Metallosphaera sedula (strain ATCC 51363 / DSM 5348 / JCM 9185 / NBRC 15509 / TH2) protein is Phenylalanine--tRNA ligase alpha subunit.